Consider the following 533-residue polypeptide: DNA primase large subunit (533 aa).

[4Fe-4S] cluster is bound by residues Cys298, Cys377, Cys393, and Cys433. The interval 466-492 is disordered; it reads RQKRANGSAPPKARIRPDIKGHGDRSM. The segment covering 480 to 490 has biased composition (basic and acidic residues); it reads IRPDIKGHGDR.

It belongs to the eukaryotic-type primase large subunit family. Heterodimer of a catalytic subunit Prim1 and a regulatory subunit Prim2, also known as the DNA primase complex. Component of the alpha DNA polymerase complex (also known as the alpha DNA polymerase-primase complex) consisting of four subunits: the catalytic subunit PolA1, the regulatory subunit PolA2, and the primase complex subunits Prim1 and Prim2 respectively. PolA1 associates with the DNA primase complex before association with PolA2. The cofactor is [4Fe-4S] cluster. Expressed in embryos (at protein level).

Regulatory subunit of the DNA primase complex and component of the DNA polymerase alpha complex (also known as the alpha DNA polymerase-primase complex) which play an essential role in the initiation of DNA synthesis. During the S phase of the cell cycle, the DNA polymerase alpha complex (composed of a catalytic subunit PolA1, an accessory subunit PolA2 and two primase subunits, the catalytic subunit Prim1 and the regulatory subunit Prim2) is recruited to DNA at the replicative forks. The primase subunit of the polymerase alpha complex initiates DNA synthesis by oligomerising short RNA primers on both leading and lagging strands. These primers are initially extended by the polymerase alpha catalytic subunit and subsequently transferred to polymerase delta and polymerase epsilon for processive synthesis on the lagging and leading strand, respectively. In the primase complex, both subunits are necessary for the initial di-nucleotide formation, but the extension of the primer depends only on the catalytic subunit. Stabilizes and modulates the activity of the catalytic subunit. The polypeptide is DNA primase large subunit (Drosophila melanogaster (Fruit fly)).